Reading from the N-terminus, the 382-residue chain is Heme A synthase (382 aa).

Helical transmembrane passes span 37–57 (IRVW…VGGL), 126–146 (VIGV…QVPA), 152–172 (LLFL…MVAS), 188–208 (LATH…YIME), 231–251 (STGL…VAGI), 288–308 (LVQF…VVVW), and 332–352 (LQIV…IAIF). Residue His293 coordinates heme. His353 contacts heme. The chain crosses the membrane as a helical span at residues 356 to 376 (LAVIVWVLILRARFLSGYPIA).

The protein belongs to the COX15/CtaA family. Type 2 subfamily. As to quaternary structure, interacts with CtaB. It depends on heme b as a cofactor.

It localises to the cell membrane. The enzyme catalyses Fe(II)-heme o + 2 A + H2O = Fe(II)-heme a + 2 AH2. It functions in the pathway porphyrin-containing compound metabolism; heme A biosynthesis; heme A from heme O: step 1/1. Catalyzes the conversion of heme O to heme A by two successive hydroxylations of the methyl group at C8. The first hydroxylation forms heme I, the second hydroxylation results in an unstable dihydroxymethyl group, which spontaneously dehydrates, resulting in the formyl group of heme A. In Roseobacter denitrificans (strain ATCC 33942 / OCh 114) (Erythrobacter sp. (strain OCh 114)), this protein is Heme A synthase.